The primary structure comprises 771 residues: Polymeric immunoglobulin receptor (771 aa).

An N-terminal signal peptide occupies residues 1–18 (MRLYLFTLLVTVFSGVST). Residues 19 to 645 (KSPIFGPQEV…DGQSRSSSSK (627 aa)) lie on the Extracellular side of the membrane. Residues 21-120 (PIFGPQEVSS…GLGTSNRGLS (100 aa)) form the Ig-like V-type 1; required for binding to polymeric IgA and IgM domain. The cysteines at positions 40 and 110 are disulfide-linked. Residues asparagine 90, asparagine 147, asparagine 170, and asparagine 206 are each glycosylated (N-linked (GlcNAc...) asparagine). 4 consecutive Ig-like V-type domains span residues 135-237 (SDTH…DLQV), 245-351 (LYKD…ESTI), 352-457 (PNRR…LQVA), and 463-563 (PNLE…IYIA). 3 cysteine pairs are disulfide-bonded: cysteine 152/cysteine 220, cysteine 257/cysteine 324, and cysteine 370/cysteine 440. 2 N-linked (GlcNAc...) asparagine glycosylation sites follow: asparagine 420 and asparagine 471. Cysteine 484 and cysteine 546 form a disulfide bridge. Positions 622–641 (QAQENRASGDAGSADGQSRS) are disordered. A compositionally biased stretch (low complexity) spans 627 to 641 (RASGDAGSADGQSRS). A helical transmembrane segment spans residues 646-668 (VLFSTLVPLGLVLAVGAIAVWVA). At 669–771 (RVRHRKNVDR…AQVHDGPQEA (103 aa)) the chain is on the cytoplasmic side. Residues serine 680, serine 689, serine 696, and serine 742 each carry the phosphoserine modification.

As to quaternary structure, interacts (mainly via CDR1-like domain) with dimeric IgA. Interacts (mainly via CDR2-like domain) with pentameric IgM. Either free or part of the secretory IgA (sIgA) complex that consists of two, four or five IgA monomers, and two additional non-Ig polypeptides, namely the JCHAIN and the secretory component (the proteolytic product of PIGR). Free secretory component interacts with bacterial antigens toxA of C.difficile and eae of E.coli. Post-translationally, N-glycosylated. N-glycosylation is required for anchoring IgA molecules to mucus, but is not necessary for Ig binding.

The protein resides in the cell membrane. It localises to the secreted. Mediates selective transcytosis of polymeric IgA and IgM across mucosal epithelial cells. Binds polymeric IgA and IgM at the basolateral surface of epithelial cells. The complex is then transported across the cell to be secreted at the apical surface. During this process, a cleavage occurs that separates the extracellular (known as the secretory component) from the transmembrane segment. Its function is as follows. Through its N-linked glycans ensures anchoring of secretory IgA (sIgA) molecules to mucus lining the epithelial surface to neutralize extracellular pathogens. On its own (free form) may act as a non-specific microbial scavenger to prevent pathogen interaction with epithelial cells. The polypeptide is Polymeric immunoglobulin receptor (Pigr) (Mus musculus (Mouse)).